The primary structure comprises 244 residues: 1-(5-phosphoribosyl)-5-[(5-phosphoribosylamino)methylideneamino] imidazole-4-carboxamide isomerase (244 aa).

Aspartate 9 functions as the Proton acceptor in the catalytic mechanism. Aspartate 131 serves as the catalytic Proton donor.

It belongs to the HisA/HisF family.

It localises to the cytoplasm. The enzyme catalyses 1-(5-phospho-beta-D-ribosyl)-5-[(5-phospho-beta-D-ribosylamino)methylideneamino]imidazole-4-carboxamide = 5-[(5-phospho-1-deoxy-D-ribulos-1-ylimino)methylamino]-1-(5-phospho-beta-D-ribosyl)imidazole-4-carboxamide. The protein operates within amino-acid biosynthesis; L-histidine biosynthesis; L-histidine from 5-phospho-alpha-D-ribose 1-diphosphate: step 4/9. The polypeptide is 1-(5-phosphoribosyl)-5-[(5-phosphoribosylamino)methylideneamino] imidazole-4-carboxamide isomerase (Campylobacter jejuni subsp. jejuni serotype O:6 (strain 81116 / NCTC 11828)).